Consider the following 141-residue polypeptide: 3-hydroxyacyl-[acyl-carrier-protein] dehydratase FabZ (141 aa).

His-49 is an active-site residue.

It belongs to the thioester dehydratase family. FabZ subfamily.

It is found in the cytoplasm. The enzyme catalyses a (3R)-hydroxyacyl-[ACP] = a (2E)-enoyl-[ACP] + H2O. Functionally, involved in unsaturated fatty acids biosynthesis. Catalyzes the dehydration of short chain beta-hydroxyacyl-ACPs and long chain saturated and unsaturated beta-hydroxyacyl-ACPs. The sequence is that of 3-hydroxyacyl-[acyl-carrier-protein] dehydratase FabZ (fabZ2) from Enterococcus faecalis (strain ATCC 700802 / V583).